A 352-amino-acid polypeptide reads, in one-letter code: MDDNKKKALAAALGQIERQFGKGAVMRMGDHDRQAIPAISTGSLGLDIALGIGGLPKGRIVEIYGPESSGKTTLTLSVIAQAQKMGATCAFVDAEHALDPEYAGKLGVNVDDLLVSQPDTGEQALEITDMLVRSNAIDVIVVDSVAALVPKAEIEGEMGDMHVGLQARLMSQALRKITGNIKNANCLVIFINQIRMKIGVMFGSPETTTGGNALKFYASVRLDIRRTGAVKEGDEVVGSETRVKVVKNKVAPPFRQAEFQILYGKGIYLNGEMIDLGVLHGFVEKSGAWYAYNGSKIGQGKANSAKFLADNPDIAATLEKQIRDKLLTAAPDVKAAANREPVDEMEEVDTDI.

Residue 65 to 72 (GPESSGKT) participates in ATP binding.

Belongs to the RecA family.

It localises to the cytoplasm. Can catalyze the hydrolysis of ATP in the presence of single-stranded DNA, the ATP-dependent uptake of single-stranded DNA by duplex DNA, and the ATP-dependent hybridization of homologous single-stranded DNAs. It interacts with LexA causing its activation and leading to its autocatalytic cleavage. Plays a functional role in the DNA rearrangement associated with the phenotypic switching from a pathogenic smooth to a nonpathogenic rough form in this bacterium. This is Protein RecA from Pseudomonas tolaasii.